The sequence spans 85 residues: uncharacterized protein (85 aa).

3 helical membrane passes run 4–24 (LTLC…LGGA), 27–47 (SPWL…LIGE), and 61–81 (RLLL…LYLA).

The protein resides in the cell membrane. This is an uncharacterized protein from Pseudomonas aeruginosa (strain ATCC 15692 / DSM 22644 / CIP 104116 / JCM 14847 / LMG 12228 / 1C / PRS 101 / PAO1).